We begin with the raw amino-acid sequence, 125 residues long: uncharacterized protein (125 aa).

The segment covering 1-33 has biased composition (polar residues); sequence MLPHQNSSYTRQGTNDAQANDMRSPSQLPTSVN. Disordered stretches follow at residues 1–35 and 44–63; these read MLPH…VNIE and SEKL…KKHT. A compositionally biased stretch (basic residues) spans 53–63; sequence NRSRSGIKKHT.

This is an uncharacterized protein from Schizosaccharomyces pombe (strain 972 / ATCC 24843) (Fission yeast).